Consider the following 386-residue polypeptide: MNIHEYQAKEILHKFNVPVPKGFVATSAEGVETQINQLKSDVFVVKAQIHAGGRGKAGGVKLAKSVEEAQQFVKNMLGITLVTHQTGPSGQQVRRIYIEEGSSIKKEYYLSLVVDPKLSRLVFIFSSEGGMDIEEVAKNSPTKIVKFDIDPATGFTNLDNSKLANNFNLNSEQIERITNIAKNIYDAFITTDASQIEINPLVETNSGDFVALDAKINFDDNALYRHPEIVQLRDYDEEVKEEIEASKHGLSYIKMDGNIGCMVNGAGLAMATMDIIKYYGAEPANFLDVGGGASKETVTEAFKIILSDSNVKGILVNIFGGIMRCDIIASGIVAAAKEMSIKVPLVVRLSGTNFEEGKKILEESGLNIIAADELGDAAQKIVKEVK.

In terms of domain architecture, ATP-grasp spans 9–244; that stretch reads KEILHKFNVP…YDEEVKEEIE (236 aa). Residues Lys46, 53 to 55, Glu99, Ser102, and Glu107 contribute to the ATP site; that span reads GRG. Residues Asn199 and Asp213 each coordinate Mg(2+). Substrate-binding positions include Asn264 and 321–323; that span reads GIM.

This sequence belongs to the succinate/malate CoA ligase beta subunit family. In terms of assembly, heterotetramer of two alpha and two beta subunits. Mg(2+) serves as cofactor.

It catalyses the reaction succinate + ATP + CoA = succinyl-CoA + ADP + phosphate. The catalysed reaction is GTP + succinate + CoA = succinyl-CoA + GDP + phosphate. The protein operates within carbohydrate metabolism; tricarboxylic acid cycle; succinate from succinyl-CoA (ligase route): step 1/1. Succinyl-CoA synthetase functions in the citric acid cycle (TCA), coupling the hydrolysis of succinyl-CoA to the synthesis of either ATP or GTP and thus represents the only step of substrate-level phosphorylation in the TCA. The beta subunit provides nucleotide specificity of the enzyme and binds the substrate succinate, while the binding sites for coenzyme A and phosphate are found in the alpha subunit. The chain is Succinate--CoA ligase [ADP-forming] subunit beta from Wolbachia pipientis subsp. Culex pipiens (strain wPip).